A 242-amino-acid polypeptide reads, in one-letter code: Glucosamine-6-phosphate deaminase (242 aa).

The Proton acceptor; for enolization step role is filled by Asp67. Residue Asn136 is the For ring-opening step of the active site. The active-site Proton acceptor; for ring-opening step is His138. Glu143 (for ring-opening step) is an active-site residue.

It belongs to the glucosamine/galactosamine-6-phosphate isomerase family. NagB subfamily.

The catalysed reaction is alpha-D-glucosamine 6-phosphate + H2O = beta-D-fructose 6-phosphate + NH4(+). The protein operates within amino-sugar metabolism; N-acetylneuraminate degradation; D-fructose 6-phosphate from N-acetylneuraminate: step 5/5. Functionally, catalyzes the reversible isomerization-deamination of glucosamine 6-phosphate (GlcN6P) to form fructose 6-phosphate (Fru6P) and ammonium ion. This is Glucosamine-6-phosphate deaminase from Alkaliphilus metalliredigens (strain QYMF).